A 416-amino-acid chain; its full sequence is Imidazolonepropionase (416 aa).

Fe(3+)-binding residues include His-78 and His-80. Residues His-78 and His-80 each contribute to the Zn(2+) site. 4-imidazolone-5-propanoate-binding residues include Arg-87, Tyr-150, and His-183. Position 150 (Tyr-150) interacts with N-formimidoyl-L-glutamate. His-248 is a binding site for Fe(3+). Position 248 (His-248) interacts with Zn(2+). Gln-251 contributes to the 4-imidazolone-5-propanoate binding site. Asp-323 is a binding site for Fe(3+). Asp-323 serves as a coordination point for Zn(2+). Positions 325 and 327 each coordinate N-formimidoyl-L-glutamate. Thr-328 is a 4-imidazolone-5-propanoate binding site.

The protein belongs to the metallo-dependent hydrolases superfamily. HutI family. Requires Zn(2+) as cofactor. Fe(3+) is required as a cofactor.

Its subcellular location is the cytoplasm. The catalysed reaction is 4-imidazolone-5-propanoate + H2O = N-formimidoyl-L-glutamate. Its pathway is amino-acid degradation; L-histidine degradation into L-glutamate; N-formimidoyl-L-glutamate from L-histidine: step 3/3. Its function is as follows. Catalyzes the hydrolytic cleavage of the carbon-nitrogen bond in imidazolone-5-propanoate to yield N-formimidoyl-L-glutamate. It is the third step in the universal histidine degradation pathway. The polypeptide is Imidazolonepropionase (Vibrio parahaemolyticus serotype O3:K6 (strain RIMD 2210633)).